The primary structure comprises 82 residues: Large ribosomal subunit protein bL27 (82 aa).

The disordered stretch occupies residues Met1–Arg20.

This sequence belongs to the bacterial ribosomal protein bL27 family.

The protein is Large ribosomal subunit protein bL27 of Neorickettsia sennetsu (strain ATCC VR-367 / Miyayama) (Ehrlichia sennetsu).